The sequence spans 222 residues: Deoxyribose-phosphate aldolase (222 aa).

D94 functions as the Proton donor/acceptor in the catalytic mechanism. The active-site Schiff-base intermediate with acetaldehyde is the K156. The active-site Proton donor/acceptor is K185.

Belongs to the DeoC/FbaB aldolase family. DeoC type 1 subfamily.

Its subcellular location is the cytoplasm. The enzyme catalyses 2-deoxy-D-ribose 5-phosphate = D-glyceraldehyde 3-phosphate + acetaldehyde. It functions in the pathway carbohydrate degradation; 2-deoxy-D-ribose 1-phosphate degradation; D-glyceraldehyde 3-phosphate and acetaldehyde from 2-deoxy-alpha-D-ribose 1-phosphate: step 2/2. In terms of biological role, catalyzes a reversible aldol reaction between acetaldehyde and D-glyceraldehyde 3-phosphate to generate 2-deoxy-D-ribose 5-phosphate. This Malacoplasma penetrans (strain HF-2) (Mycoplasma penetrans) protein is Deoxyribose-phosphate aldolase.